We begin with the raw amino-acid sequence, 338 residues long: Glycerol-3-phosphate dehydrogenase [NAD(P)+] (338 aa).

Ser13, Trp14, and Lys108 together coordinate NADPH. 3 residues coordinate sn-glycerol 3-phosphate: Lys108, Gly139, and Ser141. An NADPH-binding site is contributed by Ala143. Residues Lys194, Asp247, Ser257, Arg258, and Asn259 each coordinate sn-glycerol 3-phosphate. Catalysis depends on Lys194, which acts as the Proton acceptor. Residue Arg258 participates in NADPH binding. NADPH is bound by residues Val282 and Glu284.

The protein belongs to the NAD-dependent glycerol-3-phosphate dehydrogenase family.

The protein resides in the cytoplasm. It catalyses the reaction sn-glycerol 3-phosphate + NAD(+) = dihydroxyacetone phosphate + NADH + H(+). It carries out the reaction sn-glycerol 3-phosphate + NADP(+) = dihydroxyacetone phosphate + NADPH + H(+). It functions in the pathway membrane lipid metabolism; glycerophospholipid metabolism. Its function is as follows. Catalyzes the reduction of the glycolytic intermediate dihydroxyacetone phosphate (DHAP) to sn-glycerol 3-phosphate (G3P), the key precursor for phospholipid synthesis. The sequence is that of Glycerol-3-phosphate dehydrogenase [NAD(P)+] from Streptococcus agalactiae serotype III (strain NEM316).